The following is a 198-amino-acid chain: MPDSALPPCSILLLAGGRGQRMGGRDKGLIEWQGLPLIAHLHRLVRPLTDDLIVSCNRNQERYAAYADRLVSDDSRDFPGPLAGIRAGLAVARHPWLLVLPCDAPRIDRALLETLLQAAGRTPARPWMLRCGGQWEPLFSLIPTHLAEEIEHAWRQGDRSPRHVLLPLGAEAIELAAGDPRLANLNTPELLANHRELK.

GTP-binding positions include 14 to 16 (LAG), lysine 27, aspartate 73, and aspartate 103. Mg(2+) is bound at residue aspartate 103.

This sequence belongs to the MobA family. As to quaternary structure, monomer. Requires Mg(2+) as cofactor.

It localises to the cytoplasm. It carries out the reaction Mo-molybdopterin + GTP + H(+) = Mo-molybdopterin guanine dinucleotide + diphosphate. Transfers a GMP moiety from GTP to Mo-molybdopterin (Mo-MPT) cofactor (Moco or molybdenum cofactor) to form Mo-molybdopterin guanine dinucleotide (Mo-MGD) cofactor. This is Molybdenum cofactor guanylyltransferase from Pseudomonas aeruginosa (strain LESB58).